We begin with the raw amino-acid sequence, 244 residues long: ATP synthase subunit a (244 aa).

The next 5 helical transmembrane spans lie at 17-37, 75-95, 112-132, 170-190, and 221-241; these read LTNI…AILT, FLAL…LGLP, DPAI…YYGV, LYGN…LATS, and GAIQ…HKIS.

The protein belongs to the ATPase A chain family. F-type ATPases have 2 components, CF(1) - the catalytic core - and CF(0) - the membrane proton channel. CF(1) has five subunits: alpha(3), beta(3), gamma(1), delta(1), epsilon(1). CF(0) has three main subunits: a(1), b(2) and c(9-12). The alpha and beta chains form an alternating ring which encloses part of the gamma chain. CF(1) is attached to CF(0) by a central stalk formed by the gamma and epsilon chains, while a peripheral stalk is formed by the delta and b chains. The F(1)F(0) complex interacts with SpoIIIJ and YqjG; YqgA is found in the same complex.

The protein localises to the cell membrane. Functionally, key component of the proton channel; it plays a direct role in the translocation of protons across the membrane. The sequence is that of ATP synthase subunit a from Bacillus subtilis (strain 168).